The following is a 204-amino-acid chain: Outer-membrane lipoprotein carrier protein (204 aa).

Positions 1–21 (MKKLLVACCVVSGMMSASVLA) are cleaved as a signal peptide.

It belongs to the LolA family. In terms of assembly, monomer.

The protein localises to the periplasm. In terms of biological role, participates in the translocation of lipoproteins from the inner membrane to the outer membrane. Only forms a complex with a lipoprotein if the residue after the N-terminal Cys is not an aspartate (The Asp acts as a targeting signal to indicate that the lipoprotein should stay in the inner membrane). The sequence is that of Outer-membrane lipoprotein carrier protein from Edwardsiella ictaluri (strain 93-146).